Consider the following 284-residue polypeptide: RAD52 motif-containing protein 1 (284 aa).

Positions 1–92 (MAELVPFAVP…KQLFQKSPVK (92 aa)) are necessary for nuclear localization and for nucleolar accumulation in response to heat shock. The region spanning 15 to 98 (KTLLVWELSS…SPVKVRLGTR (84 aa)) is the RRM domain. Residues 90–133 (PVKVRLGTRHKAVQHQALALNSSKCQELANYYFGFNGCSKRIIK) form a necessary for nuclear and nucleolar localization region.

Homodimer. Expressed in testis.

It is found in the nucleus. The protein localises to the cytoplasm. It localises to the nucleolus. Its subcellular location is the PML body. The protein resides in the cajal body. May confer resistance to the antitumor agent cisplatin. Binds to DNA and RNA. The protein is RAD52 motif-containing protein 1 (RDM1) of Homo sapiens (Human).